A 122-amino-acid chain; its full sequence is Small ribosomal subunit protein bS6 (122 aa).

This sequence belongs to the bacterial ribosomal protein bS6 family.

Functionally, binds together with bS18 to 16S ribosomal RNA. This is Small ribosomal subunit protein bS6 from Trichlorobacter lovleyi (strain ATCC BAA-1151 / DSM 17278 / SZ) (Geobacter lovleyi).